The sequence spans 201 residues: Alpha-1-acid glycoprotein (201 aa).

The first 18 residues, 1 to 18, serve as a signal peptide directing secretion; sequence MALPWALAVLSLLPLLHA. 6 N-linked (GlcNAc...) asparagine glycosylation sites follow: Asn-25, Asn-33, Asn-87, Asn-93, Asn-103, and Asn-169. A disulfide bridge connects residues Cys-90 and Cys-183.

This sequence belongs to the calycin superfamily. Lipocalin family.

The protein localises to the secreted. Functionally, functions as a transport protein in the blood stream. Binds various ligands in the interior of its beta-barrel domain. Appears to function in modulating the activity of the immune system during the acute-phase reaction. The protein is Alpha-1-acid glycoprotein (ORM1) of Oryctolagus cuniculus (Rabbit).